Reading from the N-terminus, the 227-residue chain is Putative N-acetylmannosamine-6-phosphate 2-epimerase (227 aa).

Belongs to the NanE family.

It carries out the reaction an N-acyl-D-glucosamine 6-phosphate = an N-acyl-D-mannosamine 6-phosphate. It participates in amino-sugar metabolism; N-acetylneuraminate degradation; D-fructose 6-phosphate from N-acetylneuraminate: step 3/5. Its function is as follows. Converts N-acetylmannosamine-6-phosphate (ManNAc-6-P) to N-acetylglucosamine-6-phosphate (GlcNAc-6-P). The chain is Putative N-acetylmannosamine-6-phosphate 2-epimerase from Shouchella clausii (strain KSM-K16) (Alkalihalobacillus clausii).